The primary structure comprises 345 residues: Arginine-hydroxylase NDUFAF5, mitochondrial (345 aa).

A mitochondrion-targeting transit peptide spans 1-36; it reads MLRPAGLWRLCRRPWAARVPAENLGRREVTSGVSPR.

This sequence belongs to the methyltransferase superfamily. In terms of assembly, interacts with NDUFAF8, leading to stabilize NDUFAF5. Interacts with NDUFS7. Interacts with PYURF (via TRM112 domain); the interaction is direct and stabilizes NDUFAF5 protein.

Its subcellular location is the mitochondrion inner membrane. Its function is as follows. Arginine hydroxylase that mediates hydroxylation of 'Arg-111' of NDUFS7 and is involved in the assembly of mitochondrial NADH:ubiquinone oxidoreductase complex (complex I, MT-ND1) at early stages. May also have methyltransferase activity. The polypeptide is Arginine-hydroxylase NDUFAF5, mitochondrial (Homo sapiens (Human)).